Here is a 125-residue protein sequence, read N- to C-terminus: Small ribosomal subunit protein bS6m (125 aa).

It belongs to the bacterial ribosomal protein bS6 family. Component of the mitochondrial ribosome small subunit (28S) which comprises a 12S rRNA and about 30 distinct proteins.

The protein resides in the mitochondrion. This chain is Small ribosomal subunit protein bS6m (Mrps6), found in Mus musculus (Mouse).